Here is a 1044-residue protein sequence, read N- to C-terminus: Isoleucine--tRNA ligase (1044 aa).

The short motif at 48–58 (PFATGLPHFGH) is the 'HIGH' region element. The 'KMSKS' region signature appears at 594-598 (KMSKS). Lysine 597 provides a ligand contact to ATP.

It belongs to the class-I aminoacyl-tRNA synthetase family. IleS type 2 subfamily. As to quaternary structure, monomer. Zn(2+) is required as a cofactor.

It localises to the cytoplasm. The catalysed reaction is tRNA(Ile) + L-isoleucine + ATP = L-isoleucyl-tRNA(Ile) + AMP + diphosphate. In terms of biological role, catalyzes the attachment of isoleucine to tRNA(Ile). As IleRS can inadvertently accommodate and process structurally similar amino acids such as valine, to avoid such errors it has two additional distinct tRNA(Ile)-dependent editing activities. One activity is designated as 'pretransfer' editing and involves the hydrolysis of activated Val-AMP. The other activity is designated 'posttransfer' editing and involves deacylation of mischarged Val-tRNA(Ile). The polypeptide is Isoleucine--tRNA ligase (Borrelia hermsii (strain HS1 / DAH)).